A 910-amino-acid polypeptide reads, in one-letter code: Lysine-specific demethylase 7 homolog (910 aa).

Over residues 1–11 the composition is skewed to polar residues; the sequence is MDGNDINIQKN. 3 disordered regions span residues 1–58, 103–162, and 183–212; these read MDGN…HQTP, NKMG…GSEP, and QEEL…DRCG. Residues 25–35 show a composition bias toward basic and acidic residues; sequence QHSDHKNHESA. Over residues 43–58 the composition is skewed to polar residues; the sequence is YTASQPALSSTEHQTP. The span at 118–130 shows a compositional bias: basic and acidic residues; sequence PKSEPKIEPHVTD. The segment covering 150–160 has biased composition (polar residues); the sequence is ESNQNYVSNGS. Basic and acidic residues predominate over residues 200-210; sequence PEQKTPKESDR. The PHD-type zinc-finger motif lies at 208 to 290; it reads SDRCGGCGKF…KFFCPKCVPH (83 aa). The JmjC domain maps to 441 to 612; that stretch reads SDNNEMKEIA…MQMRVYHLEN (172 aa). Substrate-binding positions include 505–510, Y518, K525, and H580; that span reads TDFHVD. The Fe cation site is built by H508 and D510. Fe cation is bound at residue H580. Disordered stretches follow at residues 712–790 and 864–910; these read KIQN…PSEV and EAVH…KLKM. Basic residues predominate over residues 748–757; sequence YKKKYTKKAK. Positions 758–780 are enriched in basic and acidic residues; that stretch reads KDNDDAPKVKKAKKEEVPEEKVP.

This sequence belongs to the JHDM1 histone demethylase family. JHDM1D subfamily. The cofactor is Fe(2+). In terms of tissue distribution, mainly expressed in neurons. Also weakly expressed in some muscle, intestinal and hypodermal cells.

Its subcellular location is the nucleus. With respect to regulation, competitively inhibited by 2-hydroxyglutarate. Its function is as follows. Histone demethylase required for nervous system development. Specifically demethylates dimethylated 'Lys-9', 'Lys-23' and 'Lys-27' (H3K9me2, H3K23me2 and H3K27me2, respectively) of histone H3, thereby playing a central role in histone code. Promotes mitochondrial stress-induced longevity. The chain is Lysine-specific demethylase 7 homolog (jmjd-1.2) from Caenorhabditis elegans.